A 265-amino-acid polypeptide reads, in one-letter code: MLRRFAVIGNPIAHSLSPVIHQMFAQQTQIELIYEKILGDDVKFEQQISDFFIQYGNGLNVTLPYKKRAYELAKIRTQRCALAGVANTLWMEENQLHADNTDGIGLIRDLSRFLELKDKKILILGAGGAARGIIFPLLEAKPLKLIVANRTLEKAEELKRQFPQINVTSFAELPEFFDLIINATSASLSDQVIALPEEAFSHKPFCYDLAYNQKTSTAFVQYARNGGCEAVDGLGMLVEQAAEAFFIWNKVMPSTQKILEHLRSF.

Shikimate-binding positions include 15-17 (SLS) and Thr-62. Lys-66 acts as the Proton acceptor in catalysis. Shikimate-binding residues include Asn-87 and Asp-102. Residues 125–129 (GAGGA), 149–154 (NRTLEK), and Leu-209 each bind NADP(+). Tyr-211 is a binding site for shikimate. Gly-233 is a binding site for NADP(+).

Belongs to the shikimate dehydrogenase family. Homodimer.

The enzyme catalyses shikimate + NADP(+) = 3-dehydroshikimate + NADPH + H(+). It functions in the pathway metabolic intermediate biosynthesis; chorismate biosynthesis; chorismate from D-erythrose 4-phosphate and phosphoenolpyruvate: step 4/7. Its function is as follows. Involved in the biosynthesis of the chorismate, which leads to the biosynthesis of aromatic amino acids. Catalyzes the reversible NADPH linked reduction of 3-dehydroshikimate (DHSA) to yield shikimate (SA). In Legionella pneumophila (strain Corby), this protein is Shikimate dehydrogenase (NADP(+)).